The primary structure comprises 420 residues: Dihydrolipoyllysine-residue succinyltransferase component of 2-oxoglutarate dehydrogenase complex (420 aa).

The Lipoyl-binding domain maps to 1-76; the sequence is MAEVKVPELA…EVGQAVAVVG (76 aa). N6-lipoyllysine is present on Lys42. The interval 75 to 199 is disordered; sequence VGEGQVNTSN…IREKMSRRKK (125 aa). The span at 81 to 90 shows a compositional bias: polar residues; the sequence is NTSNDSSNES. The segment covering 91-102 has biased composition (basic and acidic residues); it reads SQKDEAKEKETP. The segment covering 103 to 127 has biased composition (polar residues); that stretch reads KQSNPNSSESENTQDNSQQRINATP. Residues 124-160 form the Peripheral subunit-binding (PSBD) domain; sequence NATPSARRHARKNGVDLSEVSGKGNDVLRKDDVENSQ. The segment covering 149-158 has biased composition (basic and acidic residues); the sequence is DVLRKDDVEN. Residues 159-174 are compositionally biased toward low complexity; the sequence is SQKSSSQTAKSESKSQ. Over residues 175 to 186 the composition is skewed to polar residues; the sequence is NSGSKQTNNNPS. Residues His391 and Asp395 contribute to the active site.

It belongs to the 2-oxoacid dehydrogenase family. As to quaternary structure, forms a 24-polypeptide structural core with octahedral symmetry. Part of the 2-oxoglutarate dehydrogenase (OGDH) complex composed of E1 (2-oxoglutarate dehydrogenase), E2 (dihydrolipoamide succinyltransferase) and E3 (dihydrolipoamide dehydrogenase); the complex contains multiple copies of the three enzymatic components (E1, E2 and E3). The cofactor is (R)-lipoate.

The catalysed reaction is N(6)-[(R)-dihydrolipoyl]-L-lysyl-[protein] + succinyl-CoA = N(6)-[(R)-S(8)-succinyldihydrolipoyl]-L-lysyl-[protein] + CoA. The protein operates within amino-acid degradation; L-lysine degradation via saccharopine pathway; glutaryl-CoA from L-lysine: step 6/6. In terms of biological role, E2 component of the 2-oxoglutarate dehydrogenase (OGDH) complex which catalyzes the second step in the conversion of 2-oxoglutarate to succinyl-CoA and CO(2). The sequence is that of Dihydrolipoyllysine-residue succinyltransferase component of 2-oxoglutarate dehydrogenase complex (odhB) from Staphylococcus epidermidis (strain ATCC 35984 / DSM 28319 / BCRC 17069 / CCUG 31568 / BM 3577 / RP62A).